Reading from the N-terminus, the 196-residue chain is Holliday junction branch migration complex subunit RuvA (196 aa).

The domain I stretch occupies residues 1–63; the sequence is MIASVRGEVI…EDSMTLYGFA (63 aa). Positions 64 to 142 are domain II; that stretch reads DADARDLFGT…PVTTGAGVTA (79 aa). The segment at 143-151 is flexible linker; sequence VGGHAVRGP. Residues 151–196 are domain III; it reads PVVEALVGLGFAAKQAEEACDKVLAADPDATTSSALRAALSMLGKK.

The protein belongs to the RuvA family. In terms of assembly, homotetramer. Forms an RuvA(8)-RuvB(12)-Holliday junction (HJ) complex. HJ DNA is sandwiched between 2 RuvA tetramers; dsDNA enters through RuvA and exits via RuvB. An RuvB hexamer assembles on each DNA strand where it exits the tetramer. Each RuvB hexamer is contacted by two RuvA subunits (via domain III) on 2 adjacent RuvB subunits; this complex drives branch migration. In the full resolvosome a probable DNA-RuvA(4)-RuvB(12)-RuvC(2) complex forms which resolves the HJ.

The protein localises to the cytoplasm. Its function is as follows. The RuvA-RuvB-RuvC complex processes Holliday junction (HJ) DNA during genetic recombination and DNA repair, while the RuvA-RuvB complex plays an important role in the rescue of blocked DNA replication forks via replication fork reversal (RFR). RuvA specifically binds to HJ cruciform DNA, conferring on it an open structure. The RuvB hexamer acts as an ATP-dependent pump, pulling dsDNA into and through the RuvAB complex. HJ branch migration allows RuvC to scan DNA until it finds its consensus sequence, where it cleaves and resolves the cruciform DNA. The polypeptide is Holliday junction branch migration complex subunit RuvA (Mycobacterium sp. (strain JLS)).